Consider the following 822-residue polypeptide: DNA gyrase subunit A (822 aa).

The 466-residue stretch at 32-497 folds into the Topo IIA-type catalytic domain; the sequence is LPDVRDGLKP…QVLSLEDEDL (466 aa). The active-site O-(5'-phospho-DNA)-tyrosine intermediate is Tyr120. Positions 524–530 match the GyrA-box motif; it reads QKRGGRG.

The protein belongs to the type II topoisomerase GyrA/ParC subunit family. Heterotetramer, composed of two GyrA and two GyrB chains. In the heterotetramer, GyrA contains the active site tyrosine that forms a transient covalent intermediate with DNA, while GyrB binds cofactors and catalyzes ATP hydrolysis.

The protein resides in the cytoplasm. It catalyses the reaction ATP-dependent breakage, passage and rejoining of double-stranded DNA.. Its function is as follows. A type II topoisomerase that negatively supercoils closed circular double-stranded (ds) DNA in an ATP-dependent manner to modulate DNA topology and maintain chromosomes in an underwound state. Negative supercoiling favors strand separation, and DNA replication, transcription, recombination and repair, all of which involve strand separation. Also able to catalyze the interconversion of other topological isomers of dsDNA rings, including catenanes and knotted rings. Type II topoisomerases break and join 2 DNA strands simultaneously in an ATP-dependent manner. The polypeptide is DNA gyrase subunit A (Streptococcus pneumoniae serotype 4 (strain ATCC BAA-334 / TIGR4)).